Consider the following 156-residue polypeptide: Arginine repressor (156 aa).

The protein belongs to the ArgR family.

Its subcellular location is the cytoplasm. It participates in amino-acid biosynthesis; L-arginine biosynthesis [regulation]. Regulates arginine biosynthesis genes. In Enterobacter sp. (strain 638), this protein is Arginine repressor.